Consider the following 445-residue polypeptide: Phosphoglucosamine mutase (445 aa).

Ser102 serves as the catalytic Phosphoserine intermediate. The Mg(2+) site is built by Ser102, Asp241, Asp243, and Asp245. Ser102 bears the Phosphoserine mark.

The protein belongs to the phosphohexose mutase family. Requires Mg(2+) as cofactor. Activated by phosphorylation.

It carries out the reaction alpha-D-glucosamine 1-phosphate = D-glucosamine 6-phosphate. Functionally, catalyzes the conversion of glucosamine-6-phosphate to glucosamine-1-phosphate. The sequence is that of Phosphoglucosamine mutase from Variovorax paradoxus (strain S110).